A 532-amino-acid chain; its full sequence is [Pyruvate dehydrogenase [acetyl-transferring]]-phosphatase 2, mitochondrial (532 aa).

The transit peptide at 1–69 directs the protein to the mitochondrion; that stretch reads MSSTVSYWIF…FALRKAYRHT (69 aa). The region spanning 107–518 is the PPM-type phosphatase domain; the sequence is NSVLRFESNQ…YRDDITVMVV (412 aa). The Mn(2+) site is built by Asp-144, Gly-145, Asp-415, and Asp-511.

Belongs to the PP2C family. Requires Mg(2+) as cofactor.

It is found in the mitochondrion. The catalysed reaction is O-phospho-L-seryl-[pyruvate dehydrogenase E1 alpha subunit] + H2O = L-seryl-[pyruvate dehydrogenase E1 alpha subunit] + phosphate. Functionally, mitochondrial enzyme that catalyzes the dephosphorylation and concomitant reactivation of the alpha subunit of the E1 component of the pyruvate dehydrogenase complex (PDC), thereby stimulating the conversion of pyruvate into acetyl-CoA. Acts as a crucial regulator of T cell metabolism and function, with a particular focus on T-helper Th17. This Mus musculus (Mouse) protein is [Pyruvate dehydrogenase [acetyl-transferring]]-phosphatase 2, mitochondrial (Pdp2).